We begin with the raw amino-acid sequence, 396 residues long: 1-deoxy-D-xylulose 5-phosphate reductoisomerase (396 aa).

The NADPH site is built by threonine 15, glycine 16, serine 17, isoleucine 18, glycine 41, and asparagine 129. Lysine 130 provides a ligand contact to 1-deoxy-D-xylulose 5-phosphate. Residue glutamate 131 participates in NADPH binding. Aspartate 155 is a Mn(2+) binding site. 1-deoxy-D-xylulose 5-phosphate contacts are provided by serine 156, glutamate 157, serine 182, and histidine 205. Glutamate 157 provides a ligand contact to Mn(2+). Residue glycine 211 participates in NADPH binding. Serine 218, asparagine 223, lysine 224, and glutamate 227 together coordinate 1-deoxy-D-xylulose 5-phosphate. Residue glutamate 227 coordinates Mn(2+).

Belongs to the DXR family. It depends on Mg(2+) as a cofactor. The cofactor is Mn(2+).

It carries out the reaction 2-C-methyl-D-erythritol 4-phosphate + NADP(+) = 1-deoxy-D-xylulose 5-phosphate + NADPH + H(+). The protein operates within isoprenoid biosynthesis; isopentenyl diphosphate biosynthesis via DXP pathway; isopentenyl diphosphate from 1-deoxy-D-xylulose 5-phosphate: step 1/6. Functionally, catalyzes the NADPH-dependent rearrangement and reduction of 1-deoxy-D-xylulose-5-phosphate (DXP) to 2-C-methyl-D-erythritol 4-phosphate (MEP). This Xanthomonas campestris pv. campestris (strain B100) protein is 1-deoxy-D-xylulose 5-phosphate reductoisomerase.